Here is a 563-residue protein sequence, read N- to C-terminus: Putative inactive polypeptide N-acetylgalactosaminyltransferase 12 (563 aa).

Topologically, residues 1–6 (MEVFAS) are cytoplasmic. A helical; Signal-anchor for type II membrane protein transmembrane segment spans residues 7 to 29 (VLNCCFKYIVLPVWIFIVLLLLH). At 30–563 (RDLSSWDGLM…SVMQSANILV (534 aa)) the chain is on the lumenal side. N-linked (GlcNAc...) asparagine glycosylation occurs at N50. An intrachain disulfide couples C97 to C334. The tract at residues 109–225 (MKPASIIMIF…NGWLSPLLDT (117 aa)) is catalytic subdomain A. Positions 280-342 (PYEVAAVRTS…PCSRVGHLQP (63 aa)) are catalytic subdomain B. N-linked (GlcNAc...) asparagine glycosylation is found at N389 and N428. The 117-residue stretch at 433 to 549 (ASGHVKTLEF…ANGKQRWILD (117 aa)) folds into the Ricin B-type lectin domain. An intrachain disulfide couples C446 to C461. N-linked (GlcNAc...) asparagine glycans are attached at residues N464 and N469. 2 disulfide bridges follow: C485-C499 and C523-C537. N-linked (GlcNAc...) asparagine glycosylation is present at N552.

This sequence belongs to the glycosyltransferase 2 family. GalNAc-T subfamily.

It localises to the golgi apparatus membrane. Functionally, probable inactive glycosyltransferase. The polypeptide is Putative inactive polypeptide N-acetylgalactosaminyltransferase 12 (pgant12) (Drosophila melanogaster (Fruit fly)).